A 220-amino-acid chain; its full sequence is tRNA (guanine-N(7)-)-methyltransferase (220 aa).

Residues Glu-42, Glu-67, and Asp-122 each contribute to the S-adenosyl-L-methionine site. Residue Asp-122 is part of the active site. Residues Lys-126, Asp-158, and 198 to 201 (TEYE) contribute to the substrate site.

This sequence belongs to the class I-like SAM-binding methyltransferase superfamily. TrmB family.

It catalyses the reaction guanosine(46) in tRNA + S-adenosyl-L-methionine = N(7)-methylguanosine(46) in tRNA + S-adenosyl-L-homocysteine. It participates in tRNA modification; N(7)-methylguanine-tRNA biosynthesis. Its function is as follows. Catalyzes the formation of N(7)-methylguanine at position 46 (m7G46) in tRNA. This is tRNA (guanine-N(7)-)-methyltransferase from Mycoplasma capricolum subsp. capricolum (strain California kid / ATCC 27343 / NCTC 10154).